We begin with the raw amino-acid sequence, 95 residues long: Putative monooxygenase YcnE (95 aa).

Residues 2–93 enclose the ABM domain; sequence IVLQAYIKVK…APLDVVRTEL (92 aa). At Ser24 the chain carries Phosphoserine.

Belongs to the LsrG family.

Its function is as follows. Putative monooxygenase that may contribute to the degradation of aromatic compounds. In Bacillus subtilis (strain 168), this protein is Putative monooxygenase YcnE (ycnE).